Reading from the N-terminus, the 115-residue chain is Nucleoid-associated protein alr5067 (115 aa).

The protein belongs to the YbaB/EbfC family. In terms of assembly, homodimer.

The protein localises to the cytoplasm. It localises to the nucleoid. In terms of biological role, binds to DNA and alters its conformation. May be involved in regulation of gene expression, nucleoid organization and DNA protection. The polypeptide is Nucleoid-associated protein alr5067 (Nostoc sp. (strain PCC 7120 / SAG 25.82 / UTEX 2576)).